The following is a 130-amino-acid chain: MVRISVLNDALKSMYNAEKRGKRQVMIRPSSKVIIKFLIVMQKHGYIGEFEYVDDHRSGKIVVELNGRLNKCGVISPRFDVGVKEIEGWTARLLPSRQFGYIVLTTSAGIMDHEEARRKNVGGKVLGFFY.

It belongs to the universal ribosomal protein uS8 family.

Its subcellular location is the cytoplasm. The polypeptide is Small ribosomal subunit protein uS8z/uS8w (RPS15AA) (Arabidopsis thaliana (Mouse-ear cress)).